A 27-amino-acid polypeptide reads, in one-letter code: Trypsin inhibitor 5 (27 aa).

Cystine bridges form between cysteine 1-cysteine 18, cysteine 8-cysteine 20, and cysteine 14-cysteine 26.

It is found in the secreted. Its function is as follows. Inhibits trypsin. The polypeptide is Trypsin inhibitor 5 (Sechium edule (Chayote)).